The primary structure comprises 207 residues: Small ribosomal subunit protein uS4 (207 aa).

The segment at 33–54 (KLDSKPGQHGRTSGARTSDYGN) is disordered. The span at 42 to 53 (GRTSGARTSDYG) shows a compositional bias: polar residues. The region spanning 97–160 (SRLDNVVYRM…KKQVRIAEAL (64 aa)) is the S4 RNA-binding domain.

Belongs to the universal ribosomal protein uS4 family. In terms of assembly, part of the 30S ribosomal subunit. Contacts protein S5. The interaction surface between S4 and S5 is involved in control of translational fidelity.

One of the primary rRNA binding proteins, it binds directly to 16S rRNA where it nucleates assembly of the body of the 30S subunit. Its function is as follows. With S5 and S12 plays an important role in translational accuracy. The sequence is that of Small ribosomal subunit protein uS4 from Cupriavidus pinatubonensis (strain JMP 134 / LMG 1197) (Cupriavidus necator (strain JMP 134)).